A 670-amino-acid polypeptide reads, in one-letter code: DEAD-box ATP-dependent RNA helicase 16 (670 aa).

Positions 1 to 10 are enriched in low complexity; the sequence is MAAAAAASSM. The disordered stretch occupies residues 1–97; that stretch reads MAAAAAASSM…EEREVSFDEL (97 aa). Basic and acidic residues-rich tracts occupy residues 18-30 and 40-49; these read AATEQEVENHDEA and NDGHTAHAAE. A Q motif motif is present at residues 92 to 120; the sequence is VSFDELGLDEQLKRALRKKGLDKATPIQR. The region spanning 123-306 is the Helicase ATP-binding domain; that stretch reads IPLILEGKDV…KLLLHNPFIL (184 aa). 136–143 is a binding site for ATP; the sequence is AKTGSGKT. The DEAD box signature appears at 254–257; sequence DEAD. Positions 340–523 constitute a Helicase C-terminal domain; it reads LVLLKLELIQ…PFPLLTKNAV (184 aa). Residues 616–670 form a disordered region; it reads DIDKPRRRKRMGFKGGSGRSSDPLKTFSAEGKSRRRGRKERDGEQDRRKRKKVES. Basic and acidic residues predominate over residues 654 to 670; it reads KERDGEQDRRKRKKVES.

It belongs to the DEAD box helicase family. DDX56/DBP9 subfamily.

The enzyme catalyses ATP + H2O = ADP + phosphate + H(+). This Oryza sativa subsp. japonica (Rice) protein is DEAD-box ATP-dependent RNA helicase 16.